The chain runs to 121 residues: Large ribosomal subunit protein bL19 (121 aa).

The protein belongs to the bacterial ribosomal protein bL19 family.

Functionally, this protein is located at the 30S-50S ribosomal subunit interface and may play a role in the structure and function of the aminoacyl-tRNA binding site. This chain is Large ribosomal subunit protein bL19, found in Chlorobium phaeovibrioides (strain DSM 265 / 1930) (Prosthecochloris vibrioformis (strain DSM 265)).